Reading from the N-terminus, the 499-residue chain is Chaperone SurA (499 aa).

Residues 1–36 form the signal peptide; sequence MKRQEFALFSLTLMLSPWRRVLLPAVLAAMAGPALA. PpiC domains lie at 231 to 333 and 352 to 450; these read PTEF…KLTA and ITQT…QVEN.

It localises to the periplasm. It catalyses the reaction [protein]-peptidylproline (omega=180) = [protein]-peptidylproline (omega=0). Functionally, chaperone involved in the correct folding and assembly of outer membrane proteins. Recognizes specific patterns of aromatic residues and the orientation of their side chains, which are found more frequently in integral outer membrane proteins. May act in both early periplasmic and late outer membrane-associated steps of protein maturation. The polypeptide is Chaperone SurA (Cupriavidus pinatubonensis (strain JMP 134 / LMG 1197) (Cupriavidus necator (strain JMP 134))).